The following is a 93-amino-acid chain: MFPKRQGIIVWLHSLKHSKHLRKFGNIHYVSKRLKYAVLYCDMEQVDEMMKKLASLPFVKRVEPSYRPFLKLEFESKGEKEKNSSYPLGYSAE.

This sequence belongs to the UPF0298 family.

It is found in the cytoplasm. In Geobacillus sp. (strain WCH70), this protein is UPF0298 protein GWCH70_0997.